Here is a 178-residue protein sequence, read N- to C-terminus: Inorganic pyrophosphatase (178 aa).

Substrate contacts are provided by Lys-31, Arg-45, and Tyr-57. Residues Asp-67, Asp-72, and Asp-104 each coordinate Mg(2+). Residue Tyr-141 participates in substrate binding.

Belongs to the PPase family. In terms of assembly, homohexamer. The cofactor is Mg(2+).

The protein resides in the cytoplasm. It carries out the reaction diphosphate + H2O = 2 phosphate + H(+). Functionally, catalyzes the hydrolysis of inorganic pyrophosphate (PPi) forming two phosphate ions. This Leptospira interrogans serogroup Icterohaemorrhagiae serovar copenhageni (strain Fiocruz L1-130) protein is Inorganic pyrophosphatase.